Reading from the N-terminus, the 131-residue chain is Small ribosomal subunit protein bS6 (131 aa).

The segment at 96 to 131 (VTAPSPMMKEEKSKSLLAKDEAAAPAPAPATEQATA) is disordered. Basic and acidic residues predominate over residues 103–117 (MKEEKSKSLLAKDEA). Low complexity predominate over residues 118 to 131 (AAPAPAPATEQATA).

This sequence belongs to the bacterial ribosomal protein bS6 family.

Functionally, binds together with bS18 to 16S ribosomal RNA. The chain is Small ribosomal subunit protein bS6 from Methylobacillus flagellatus (strain ATCC 51484 / DSM 6875 / VKM B-1610 / KT).